The chain runs to 277 residues: Large ribosomal subunit protein uL15c (277 aa).

The N-terminal 67 residues, 1 to 67, are a transit peptide targeting the chloroplast; the sequence is MATPLSISSN…FARPLVVVSQ (67 aa). Residue Thr-68 is modified to N-acetylthreonine. Residues 81–125 are disordered; the sequence is FRLDNLGPQPGSRKKQKRKGRGISAGQGASCGFGMRGQKSRSGPG. Basic residues predominate over residues 92–101; it reads SRKKQKRKGR. The segment covering 103–115 has biased composition (gly residues); it reads ISAGQGASCGFGM.

It belongs to the universal ribosomal protein uL15 family. Part of the 50S ribosomal subunit.

It localises to the plastid. The protein localises to the chloroplast. This Arabidopsis thaliana (Mouse-ear cress) protein is Large ribosomal subunit protein uL15c (RPL15).